The following is a 732-amino-acid chain: Formin-homology and zinc finger domains protein 1 (732 aa).

Low complexity-rich tracts occupy residues 1 to 12 (MMLASSAPTAPS), 19 to 45 (QPSA…SDAS), 121 to 137 (QQQQ…QSSS), and 240 to 251 (SSPKSPTSPTQP). A signal peptide spans 1–27 (MMLASSAPTAPSLLPPSSQPSAATTRA). 3 disordered regions span residues 1–45 (MMLA…SDAS), 121–141 (QQQQ…SDRK), and 232–267 (RGRP…RRNT). A compositionally biased stretch (polar residues) spans 256–267 (SQASSLPSRRNT). Positions 355-732 (PISLSSSIIP…DDHHINVSSP (378 aa)) constitute an FH2 domain.

It belongs to the formin homology family. As to expression, transiently expressed in all mesoderm derived progenitor body wall muscle cells before they differentiate.

Functionally, acts redundantly with hlh-1 to promote body wall muscle cell and coelomocyte specification in postembryonic mesoderm progenitors, probably through suppression of sem-2. The chain is Formin-homology and zinc finger domains protein 1 from Caenorhabditis elegans.